The following is a 336-amino-acid chain: Dihydroorotate dehydrogenase (quinone) (336 aa).

Residues 62 to 66 and Thr-86 contribute to the FMN site; that span reads AGLDK. A substrate-binding site is contributed by Lys-66. Residue 111 to 115 participates in substrate binding; sequence NRMGF. Residues Asn-139 and Asn-172 each coordinate FMN. Asn-172 provides a ligand contact to substrate. Ser-175 functions as the Nucleophile in the catalytic mechanism. Position 177 (Asn-177) interacts with substrate. Positions 217 and 245 each coordinate FMN. Residue 246-247 participates in substrate binding; the sequence is NT. FMN contacts are provided by residues Gly-268, Gly-297, and 318-319; that span reads YS.

The protein belongs to the dihydroorotate dehydrogenase family. Type 2 subfamily. As to quaternary structure, monomer. Requires FMN as cofactor.

It localises to the cell membrane. It catalyses the reaction (S)-dihydroorotate + a quinone = orotate + a quinol. It participates in pyrimidine metabolism; UMP biosynthesis via de novo pathway; orotate from (S)-dihydroorotate (quinone route): step 1/1. Functionally, catalyzes the conversion of dihydroorotate to orotate with quinone as electron acceptor. The polypeptide is Dihydroorotate dehydrogenase (quinone) (Escherichia coli (strain SE11)).